Reading from the N-terminus, the 472-residue chain is UDP-glycosyltransferase 708G2 (472 aa).

The active-site Proton acceptor is the His23. His23 lines the an anthocyanidin pocket. Residue Asp117 is the Charge relay of the active site. A UDP-alpha-D-glucose-binding site is contributed by Thr140. Residues 283-284 (SR) form a UDP region. Val346, Gln348, His363, Trp366, Asn367, Ser368, and Glu371 together coordinate UDP-alpha-D-glucose. An anthocyanidin is bound at residue Gly386. The UDP-alpha-D-glucose site is built by Asp387 and Gln388.

Belongs to the UDP-glycosyltransferase family. In terms of tissue distribution, expressed at low levels in leaves, flowers and immature leaves.

It carries out the reaction a 3'-hydro-2'-hydroxy-beta-oxodihydrochalcone + UDP-alpha-D-glucose = a 3'-(beta-D-glucopyranosyl)-2'-hydroxy-beta-oxodihydrochalcone + UDP + H(+). Functionally, UDP-glucose-dependent glucosyltransferase catalyzing the C-glucosylation of 2-hydroxyflavanones (2-hydroxylnaringenin and 2-hydroxypinocembrin) and phloretin. No activity with flavanones, flavones or flavonols. Exhibits C-glucosylation activity toward 2-phenyl-2',4',6'-trihydroxyacetophenone. Can use UDP-xylose as sugar donor, but catalytic efficiency is much lower toward UDP-xylose than toward UDP-glucose. This chain is UDP-glycosyltransferase 708G2 (UGT708G2), found in Citrus unshiu (Satsuma mandarin).